The sequence spans 713 residues: Phosphoribosylformylglycinamidine synthase subunit PurL (713 aa).

Histidine 34 is an active-site residue. Tyrosine 37 and arginine 73 together coordinate ATP. Residue glutamate 75 participates in Mg(2+) binding. Substrate is bound by residues 76 to 79 (SHNH) and arginine 98. Catalysis depends on histidine 77, which acts as the Proton acceptor. Aspartate 99 lines the Mg(2+) pocket. Glutamine 221 is a binding site for substrate. Aspartate 249 is a binding site for Mg(2+). 292-294 (ESQ) contacts substrate. Residues aspartate 474 and glycine 511 each coordinate ATP. Serine 514 provides a ligand contact to substrate.

This sequence belongs to the FGAMS family. Monomer. Part of the FGAM synthase complex composed of 1 PurL, 1 PurQ and 2 PurS subunits.

The protein resides in the cytoplasm. It carries out the reaction N(2)-formyl-N(1)-(5-phospho-beta-D-ribosyl)glycinamide + L-glutamine + ATP + H2O = 2-formamido-N(1)-(5-O-phospho-beta-D-ribosyl)acetamidine + L-glutamate + ADP + phosphate + H(+). It participates in purine metabolism; IMP biosynthesis via de novo pathway; 5-amino-1-(5-phospho-D-ribosyl)imidazole from N(2)-formyl-N(1)-(5-phospho-D-ribosyl)glycinamide: step 1/2. Its function is as follows. Part of the phosphoribosylformylglycinamidine synthase complex involved in the purines biosynthetic pathway. Catalyzes the ATP-dependent conversion of formylglycinamide ribonucleotide (FGAR) and glutamine to yield formylglycinamidine ribonucleotide (FGAM) and glutamate. The FGAM synthase complex is composed of three subunits. PurQ produces an ammonia molecule by converting glutamine to glutamate. PurL transfers the ammonia molecule to FGAR to form FGAM in an ATP-dependent manner. PurS interacts with PurQ and PurL and is thought to assist in the transfer of the ammonia molecule from PurQ to PurL. This is Phosphoribosylformylglycinamidine synthase subunit PurL from Ignicoccus hospitalis (strain KIN4/I / DSM 18386 / JCM 14125).